A 239-amino-acid chain; its full sequence is MNIDIVISADHIDEKRLINKTVIIIDILRATSVITTAINNGCKKVIPVLTVEEAKDIAKNSKEDIILGGERNALKIDGFNFSNSPLEYTKKYVEGKTVVLSTTNGTRAINNSFNAKTILISALINSKATAKAIDKLNEDLIIINSGTNGQFSIDDFICSGYLIDCLYNIRKDLELSDIAKTAHYIYTNNKDIESFVKKATHYSRLKSLNLEKDLEYCFQKDIIDVVPQYKDGYIIKLNI.

Belongs to the ComB family. The cofactor is Mg(2+).

The catalysed reaction is (2R)-O-phospho-3-sulfolactate + H2O = (2R)-3-sulfolactate + phosphate. This chain is Probable 2-phosphosulfolactate phosphatase, found in Clostridium botulinum (strain 657 / Type Ba4).